The following is a 125-amino-acid chain: Classical arabinogalactan protein 27 (125 aa).

An N-terminal signal peptide occupies residues 1-21 (MASSILLTLITFIFLSSLSLS). Residues 20–36 (LSSPTTNTIPSSQTISP) are compositionally biased toward low complexity. The disordered stretch occupies residues 20–95 (LSSPTTNTIP…ASPPASSLAS (76 aa)). Polar residues predominate over residues 53–66 (AVSSTQTIPSSSTL). Positions 77-95 (DPDPAFAPSASPPASSLAS) are enriched in low complexity. A lipid anchor (GPI-anchor amidated serine) is attached at Ser-98. A propeptide spans 99–125 (QAPGVFIYFVFAAVYCFSLRLLAVSAI) (removed in mature form).

Belongs to the classical AGP family. O-glycosylated on the hydroxyproline residues.

The protein localises to the cell membrane. Its function is as follows. Proteoglycan that seems to be implicated in diverse developmental roles such as differentiation, cell-cell recognition, embryogenesis and programmed cell death. This Arabidopsis thaliana (Mouse-ear cress) protein is Classical arabinogalactan protein 27 (AGP27).